The following is a 57-amino-acid chain: UPF0391 membrane protein Nham_2738 (57 aa).

The next 2 membrane-spanning stretches (helical) occupy residues 4–24 (WVVT…GGLA) and 30–50 (IAKI…VVGL).

The protein belongs to the UPF0391 family.

It is found in the cell membrane. This chain is UPF0391 membrane protein Nham_2738, found in Nitrobacter hamburgensis (strain DSM 10229 / NCIMB 13809 / X14).